Consider the following 206-residue polypeptide: 21.9 kDa heat shock protein (206 aa).

An N-terminal signal peptide occupies residues 1 to 29; it reads MAAVAEREVLGMVAAVAAMVVMMAPPAAA. The sHSP domain occupies 65–187; it reads EPAAVALARC…GREPRVVAID (123 aa). Residues 94-96 carry the Cell attachment site motif; it reads RGD.

It belongs to the small heat shock protein (HSP20) family. May form oligomeric structures.

The protein localises to the endoplasmic reticulum. This is 21.9 kDa heat shock protein (HSP21.9) from Oryza sativa subsp. japonica (Rice).